The primary structure comprises 432 residues: Tyrosine--tRNA ligase (432 aa).

Tyrosine 35 contacts L-tyrosine. The short motif at 40–49 (PTAGSLHVGH) is the 'HIGH' region element. Positions 175 and 179 each coordinate L-tyrosine. The short motif at 239–243 (KFGKT) is the 'KMSKS' region element. Residue lysine 242 participates in ATP binding. An S4 RNA-binding domain is found at 365–422 (PPLVDLFASTGLVPSKSAARRTIQEGGAYLNNAKVTDIEARVSEADLLHGRYLVLRRG).

It belongs to the class-I aminoacyl-tRNA synthetase family. TyrS type 1 subfamily. As to quaternary structure, homodimer.

It localises to the cytoplasm. The enzyme catalyses tRNA(Tyr) + L-tyrosine + ATP = L-tyrosyl-tRNA(Tyr) + AMP + diphosphate + H(+). Its function is as follows. Catalyzes the attachment of tyrosine to tRNA(Tyr) in a two-step reaction: tyrosine is first activated by ATP to form Tyr-AMP and then transferred to the acceptor end of tRNA(Tyr). In Thermobifida fusca (strain YX), this protein is Tyrosine--tRNA ligase.